Reading from the N-terminus, the 364-residue chain is MQDRQKAQDYRALLLADTPLIDVRAPIEFEQGAMPGAINLPLMMDDERAAVGTCYKRQGADAALALGHRLVCGDIRQQRLEAWKAAYQRFPNGYLCCARGGQRSHIVQRWLQETGIDCPLIEGGYKALRQTAIQATWQLAQKPILLIGGCTGSGKTQLVRQQPNGVDLEGLARHRGSSFGRTLNPQLSQASFENKLAVELLKINARQTLKRWVLEDEGRTIGANHLPECLRERMAQAPIAVVEDPFALRLERLREEYFIRMHHDFTHAYGDEAGWQAYSEYLHHGLFAIRRRLGLQRFAELTDTLDRALAEQLSSGSTDGHMAWLVPLLNEYYDPMYRYQLEKKAANIVFRGTWQEVANWLKAQ.

One can recognise a Rhodanese domain in the interval 14–137; the sequence is LLADTPLIDV…LRQTAIQATW (124 aa). The S-selanylcysteine intermediate role is filled by cysteine 97.

This sequence belongs to the SelU family. Monomer.

It catalyses the reaction 5-methylaminomethyl-2-thiouridine(34) in tRNA + selenophosphate + (2E)-geranyl diphosphate + H2O + H(+) = 5-methylaminomethyl-2-selenouridine(34) in tRNA + (2E)-thiogeraniol + phosphate + diphosphate. The enzyme catalyses 5-methylaminomethyl-2-thiouridine(34) in tRNA + (2E)-geranyl diphosphate = 5-methylaminomethyl-S-(2E)-geranyl-thiouridine(34) in tRNA + diphosphate. The catalysed reaction is 5-methylaminomethyl-S-(2E)-geranyl-thiouridine(34) in tRNA + selenophosphate + H(+) = 5-methylaminomethyl-2-(Se-phospho)selenouridine(34) in tRNA + (2E)-thiogeraniol. It carries out the reaction 5-methylaminomethyl-2-(Se-phospho)selenouridine(34) in tRNA + H2O = 5-methylaminomethyl-2-selenouridine(34) in tRNA + phosphate. Its function is as follows. Involved in the post-transcriptional modification of the uridine at the wobble position (U34) of tRNA(Lys), tRNA(Glu) and tRNA(Gln). Catalyzes the conversion of 2-thiouridine (S2U-RNA) to 2-selenouridine (Se2U-RNA). Acts in a two-step process involving geranylation of 2-thiouridine (S2U) to S-geranyl-2-thiouridine (geS2U) and subsequent selenation of the latter derivative to 2-selenouridine (Se2U) in the tRNA chain. The sequence is that of tRNA 2-selenouridine synthase from Salmonella enteritidis PT4 (strain P125109).